We begin with the raw amino-acid sequence, 482 residues long: 23S rRNA (uracil(1939)-C(5))-methyltransferase RlmD (482 aa).

Residues C85, C95, C98, and C177 each contribute to the [4Fe-4S] cluster site. S-adenosyl-L-methionine contacts are provided by Q285, F314, N319, E335, N370, and D391. C438 functions as the Nucleophile in the catalytic mechanism.

This sequence belongs to the class I-like SAM-binding methyltransferase superfamily. RNA M5U methyltransferase family. RlmD subfamily.

It catalyses the reaction uridine(1939) in 23S rRNA + S-adenosyl-L-methionine = 5-methyluridine(1939) in 23S rRNA + S-adenosyl-L-homocysteine + H(+). In terms of biological role, catalyzes the formation of 5-methyl-uridine at position 1939 (m5U1939) in 23S rRNA. This Acidovorax sp. (strain JS42) protein is 23S rRNA (uracil(1939)-C(5))-methyltransferase RlmD.